The sequence spans 805 residues: Angiotensin-converting enzyme 2 (805 aa).

Positions 1–17 (MSSSSWLLLSLVAVTAA) are cleaved as a signal peptide. At 18–740 (QSTIEEQAKT…LGPPNQPPVS (723 aa)) the chain is on the extracellular side. The Peptidase M2 domain occupies 19 to 607 (STIEEQAKTF…QNKNSFVGWS (589 aa)). The interaction with SARS-CoV spike glycoprotein stretch occupies residues 30–41 (DKFNHEAEDLFY). N-linked (GlcNAc...) asparagine glycosylation is present at Asn53. An interaction with SARS-CoV spike glycoprotein region spans residues 82-84 (MYP). 2 N-linked (GlcNAc...) asparagine glycosylation sites follow: Asn90 and Asn103. A disulfide bond links Cys133 and Cys141. Arg169 is a binding site for chloride. Position 273 (Arg273) interacts with substrate. Residue Asn322 is glycosylated (N-linked (GlcNAc...) asparagine). A disulfide bridge connects residues Cys344 and Cys361. 345 to 346 (HP) contributes to the substrate binding site. Residues 353 to 357 (KGDFR) are interaction with SARS-CoV spike glycoprotein. His374 provides a ligand contact to Zn(2+). The active-site Proton acceptor is the Glu375. Zn(2+) is bound by residues His378 and Glu402. Asn432 carries N-linked (GlcNAc...) asparagine glycosylation. Positions 477 and 481 each coordinate chloride. Catalysis depends on His505, which acts as the Proton donor. Tyr515 is a binding site for substrate. A disulfide bridge links Cys530 with Cys542. N-linked (GlcNAc...) asparagine glycosylation is present at Asn546. The Collectrin-like domain maps to 614–805 (ADQSIKVRIS…QNTDDVQTSF (192 aa)). Residues 652–659 (RQYFLKVK) are essential for cleavage by ADAM17. Asn690 carries an N-linked (GlcNAc...) asparagine glycan. The segment at 697–716 (RTEVEKAIRMSRSRINDAFR) is essential for cleavage by TMPRSS11D and TMPRSS2. Residues 741-761 (IWLIVFGVVMGVIVVGIVILI) traverse the membrane as a helical segment. Residues 762–805 (FTGIRDRKKKNKARSGENPYASIDISKGENNPGFQNTDDVQTSF) are Cytoplasmic-facing. The interval 772–805 (NKARSGENPYASIDISKGENNPGFQNTDDVQTSF) is disordered. An LIR motif is present at residues 778–786 (ENPYASIDI). The residue at position 781 (Tyr781) is a Phosphotyrosine. Residues 781 to 784 (YASI) carry the Endocytic sorting signal motif. The SH2-binding signature appears at 781-785 (YASID). The residue at position 783 (Ser783) is a Phosphoserine. Lys788 participates in a covalent cross-link: Glycyl lysine isopeptide (Lys-Gly) (interchain with G-Cter in ubiquitin). Positions 789-805 (GENNPGFQNTDDVQTSF) are enriched in polar residues. A PTB motif is present at residues 792–795 (NPGF). Positions 803 to 805 (TSF) match the PDZ-binding motif.

Belongs to the peptidase M2 family. Homodimer. Interacts with the catalytically active form of TMPRSS2. Interacts with SLC6A19; this interaction is essential for expression and function of SLC6A19 in intestine. Interacts with ITGA5:ITGB1. Probably interacts (via endocytic sorting signal motif) with AP2M1; the interaction is inhibited by phosphorylation of Tyr-781. Interacts (via PDZ-binding motif) with NHERF1 (via PDZ domains); the interaction may enhance ACE2 membrane residence. As to quaternary structure, (Microbial infection) Interacts with SARS coronavirus/SARS-CoV spike protein. In terms of assembly, (Microbial infection) Interacts with SARS coronavirus-2/SARS-CoV-2 spike protein (via RBD domain). (Microbial infection) Interacts with human coronavirus NL63 spike protein. As to quaternary structure, (Microbial infection) Interacts with human coronavirus NL63/HCoV-NL63 spike glycoprotein. In terms of assembly, (Microbial infection) Interacts with SARS coronavirus-2/SARS-CoV-2 spike protein; the interaction is increased by AVP/Arg-vasopressin with which they may form a complex. Zn(2+) is required as a cofactor. Requires chloride as cofactor. N-glycosylation on Asn-90 may limit SARS infectivity. In terms of processing, proteolytic cleavage by ADAM17 generates a secreted form. Also cleaved by serine proteases: TMPRSS2, TMPRSS11D and HPN/TMPRSS1. Post-translationally, phosphorylated. Phosphorylation at Tyr-781 probably inhibits interaction with AP2M1 and enables interactions with proteins containing SH2 domains. Ubiquitinated. Ubiquitinated on Lys-788 via 'Lys-48'-linked ubiquitin. 'Lys-48'-linked deubiquitinated by USP50 on the Lys-788; leading to its stabilization. Expressed in endothelial cells from small and large arteries, and in arterial smooth muscle cells (at protein level). Expressed in enterocytes of the small intestine, Leydig cells and Sertoli cells (at protein level). Expressed in the renal proximal tubule and the small intestine (at protein level). Expressed in heart, kidney, testis, and gastrointestinal system (at protein level). In lung, expressed at low levels in some alveolar type 2 cells, the expression seems to be individual-specific (at protein level). Expressed in nasal epithelial cells (at protein level). Coexpressed with TMPRSS2 within some lung alveolar type 2 cells, ileal absorptive enterocytes, intestinal epithelial cells, cornea, gallbladder and nasal goblet secretory cells. Coexpressed with TMPRSS4 within mature enterocytes. As to expression, expressed in nasal and bronchial epithelial cells (at protein level).

The protein resides in the secreted. The protein localises to the cell membrane. It localises to the cytoplasm. Its subcellular location is the cell projection. It is found in the cilium. The protein resides in the apical cell membrane. The enzyme catalyses angiotensin II + H2O = angiotensin-(1-7) + L-phenylalanine. The catalysed reaction is angiotensin I + H2O = angiotensin-(1-9) + L-leucine. It carries out the reaction bradykinin(1-8) + H2O = bradykinin(1-7) + L-phenylalanine. It catalyses the reaction neurotensin + H2O = neurotensin-(1-12) + L-leucine. The enzyme catalyses neurotensin-(1-8) + H2O = neurotensin-(1-7) + L-arginine. The catalysed reaction is kinetensin + H2O = kinetensin-(1-8) + L-leucine. It carries out the reaction dynorphin A-(1-13) + H2O = dynorphin A-(1-12) + L-lysine. It catalyses the reaction apelin-13 + H2O = apelin-12 + L-phenylalanine. The enzyme catalyses [Pyr1]apelin-13 + H2O = [Pyr1]apelin-12 + L-phenylalanine. The catalysed reaction is apelin-17 + H2O = apelin-16 + L-phenylalanine. It carries out the reaction beta-casomorphin-7 + H2O = beta-casomorphin-6 + L-isoleucine. It catalyses the reaction neocasomorphin + H2O = neocasomorphin-(1-5) + L-isoleucine. Its activity is regulated as follows. Regulated by chloride and fluoride, but not bromide. Chloride increases angiotensin I and decreases angiotensin II cleavage. Inhibited by MLN-4760, cFP_Leu, and EDTA, but not by the ACE inhibitors lisinopril, captopril and enalaprilat. Highly potent and selective in vitro ACE2 inhibitors were identified. In terms of biological role, essential counter-regulatory carboxypeptidase of the renin-angiotensin hormone system that is a critical regulator of blood volume, systemic vascular resistance, and thus cardiovascular homeostasis. Converts angiotensin I to angiotensin 1-9, a nine-amino acid peptide with anti-hypertrophic effects in cardiomyocytes, and angiotensin II to angiotensin 1-7, which then acts as a beneficial vasodilator and anti-proliferation agent, counterbalancing the actions of the vasoconstrictor angiotensin II. Also removes the C-terminal residue from three other vasoactive peptides, neurotensin, kinetensin, and des-Arg bradykinin, but is not active on bradykinin. Also cleaves other biological peptides, such as apelins (apelin-13, [Pyr1]apelin-13, apelin-17, apelin-36), casomorphins (beta-casomorphin-7, neocasomorphin) and dynorphin A with high efficiency. In addition, ACE2 C-terminus is homologous to collectrin and is responsible for the trafficking of the neutral amino acid transporter SL6A19 to the plasma membrane of gut epithelial cells via direct interaction, regulating its expression on the cell surface and its catalytic activity. Its function is as follows. (Microbial infection) Acts as a receptor for human coronaviruses SARS-CoV and SARS-CoV-2, as well as human coronavirus NL63/HCoV-NL63. Non-functional as a carboxypeptidase. Functionally, (Microbial infection) Non-functional as a receptor for human coronavirus SARS-CoV-2. This is Angiotensin-converting enzyme 2 from Homo sapiens (Human).